Consider the following 352-residue polypeptide: MASEKEIRRERFLNVFPKLVEELNASLLAYGMPKEACDWYAHSLNYNTPGGKLNRGLSVVDTYAILSNKTVEQLGQEEYEKVAILGWCIELLQAYFLVADDMMDKSITRRGQPCWYKVPEVGEIAINDAFMLEAAIYKLLKSHFRNEKYYIDITELFHEVTFQTELGQLMDLITAPEDKVDLSKFSLKKHSFIVTFKTAYYSFYLPVALAMYVAGITDEKDLKQARDVLIPLGEYFQIQDDYLDCFGTPEQIGKIGTDIQDNKCSWVINKALELASAEQRKTLDENYGKKDSVAEAKCKKIFNDLKIEQLYHEYEESIAKDLKAKISQVDESRGFKADVLTAFLNKVYKRSK.

Isopentenyl diphosphate-binding residues include Lys-52, Arg-55, and Gln-93. Mg(2+)-binding residues include Asp-100 and Asp-104. Arg-109 is a binding site for dimethylallyl diphosphate. Arg-110 serves as a coordination point for isopentenyl diphosphate. Residues Lys-197, Thr-198, Gln-237, Lys-254, and Lys-263 each contribute to the dimethylallyl diphosphate site.

This sequence belongs to the FPP/GGPP synthase family. Requires Mg(2+) as cofactor.

The catalysed reaction is isopentenyl diphosphate + dimethylallyl diphosphate = (2E)-geranyl diphosphate + diphosphate. It catalyses the reaction isopentenyl diphosphate + (2E)-geranyl diphosphate = (2E,6E)-farnesyl diphosphate + diphosphate. It functions in the pathway isoprenoid biosynthesis; farnesyl diphosphate biosynthesis; farnesyl diphosphate from geranyl diphosphate and isopentenyl diphosphate: step 1/1. Its pathway is isoprenoid biosynthesis; geranyl diphosphate biosynthesis; geranyl diphosphate from dimethylallyl diphosphate and isopentenyl diphosphate: step 1/1. Functionally, farnesyl pyrophosphate synthase; part of the second module of ergosterol biosynthesis pathway that includes the middle steps of the pathway. ERG20 catalyzes the sequential condensation of isopentenyl pyrophosphate with dimethylallyl pyrophosphate, and then with the resultant geranylpyrophosphate to the ultimate product farnesyl pyrophosphate. The second module is carried out in the vacuole and involves the formation of farnesyl diphosphate, which is also an important intermediate in the biosynthesis of ubiquinone, dolichol, heme and prenylated proteins. Activity by the mevalonate kinase ERG12 first converts mevalonate into 5-phosphomevalonate. 5-phosphomevalonate is then further converted to 5-diphosphomevalonate by the phosphomevalonate kinase ERG8. The diphosphomevalonate decarboxylase MVD1/ERG19 then produces isopentenyl diphosphate. The isopentenyl-diphosphate delta-isomerase IDI1 then catalyzes the 1,3-allylic rearrangement of the homoallylic substrate isopentenyl (IPP) to its highly electrophilic allylic isomer, dimethylallyl diphosphate (DMAPP). Finally the farnesyl diphosphate synthase ERG20 catalyzes the sequential condensation of isopentenyl pyrophosphate with dimethylallyl pyrophosphate, and then with the resultant geranylpyrophosphate to the ultimate product farnesyl pyrophosphate. The chain is Farnesyl pyrophosphate synthase (ERG20) from Saccharomyces cerevisiae (strain ATCC 204508 / S288c) (Baker's yeast).